We begin with the raw amino-acid sequence, 389 residues long: MFNPAILVLADGSTFYGKSIGYQAVSAYSIGEVVFNTAMTGYQEILTDPSYAKQIVTLTYPHIGNTGTNDEDNESNQIYASGLIIRDLPLLHSNFRATSSLSDYLIQHNIIAIADIDTRRLTRILRETGSQAGCIYIPNENESLAQAVEKAQDLAKSFGSMAGKDLAKEVTCQHRYEWQEGIWHLPTNNAGKPFNLQTTPTFHVVAYDFGIKQNILRMLAERGCKITVVPAQTSAEDILALNPDGIFLSNGPGDPEPCTYAIQSIRQLLNTQKPIFGICLGHQLLGLAVGAKTRKMAFGHHGANHPVQDLKTEHVLITSQNHGFEIDEYSLPENVIVTHRSLFDNSVQGIELTNQVAFSFQGHPEANPGPQDVAYLFDKFINAVQATKA.

The tract at residues 1–199 (MFNPAILVLA…AGKPFNLQTT (199 aa)) is CPSase. Residues S50, G251, and G253 each contribute to the L-glutamine site. Residues 203–389 (HVVAYDFGIK…FINAVQATKA (187 aa)) form the Glutamine amidotransferase type-1 domain. The active-site Nucleophile is the C279. Residues L280, Q283, N321, G323, and F324 each coordinate L-glutamine. Catalysis depends on residues H363 and E365.

It belongs to the CarA family. As to quaternary structure, composed of two chains; the small (or glutamine) chain promotes the hydrolysis of glutamine to ammonia, which is used by the large (or ammonia) chain to synthesize carbamoyl phosphate. Tetramer of heterodimers (alpha,beta)4.

The enzyme catalyses hydrogencarbonate + L-glutamine + 2 ATP + H2O = carbamoyl phosphate + L-glutamate + 2 ADP + phosphate + 2 H(+). It catalyses the reaction L-glutamine + H2O = L-glutamate + NH4(+). It functions in the pathway amino-acid biosynthesis; L-arginine biosynthesis; carbamoyl phosphate from bicarbonate: step 1/1. It participates in pyrimidine metabolism; UMP biosynthesis via de novo pathway; (S)-dihydroorotate from bicarbonate: step 1/3. Functionally, small subunit of the glutamine-dependent carbamoyl phosphate synthetase (CPSase). CPSase catalyzes the formation of carbamoyl phosphate from the ammonia moiety of glutamine, carbonate, and phosphate donated by ATP, constituting the first step of 2 biosynthetic pathways, one leading to arginine and/or urea and the other to pyrimidine nucleotides. The small subunit (glutamine amidotransferase) binds and cleaves glutamine to supply the large subunit with the substrate ammonia. In Haemophilus ducreyi (strain 35000HP / ATCC 700724), this protein is Carbamoyl phosphate synthase small chain.